Consider the following 570-residue polypeptide: Putative periplasmic trehalase (570 aa).

The N-terminal stretch at 1-34 (MIPPEIRRSVLLQKAIKLALAGTLLTFASFSATA) is a signal peptide. Residues Arg159, 166 to 167 (WD), Asn203, 212 to 214 (RSQ), 284 to 286 (RPE), and Gly317 contribute to the substrate site. Catalysis depends on proton donor/acceptor residues Asp319 and Glu503. Glu518 provides a ligand contact to substrate. A disordered region spans residues 544–570 (KPCDSVPSTRPASLSATPTKTPSAATQ). A compositionally biased stretch (low complexity) spans 554–570 (PASLSATPTKTPSAATQ).

The protein belongs to the glycosyl hydrolase 37 family. In terms of assembly, monomer.

The protein localises to the periplasm. It carries out the reaction alpha,alpha-trehalose + H2O = alpha-D-glucose + beta-D-glucose. Provides the cells with the ability to utilize trehalose at high osmolarity by splitting it into glucose molecules that can subsequently be taken up by the phosphotransferase-mediated uptake system. The polypeptide is Putative periplasmic trehalase (Salmonella typhi).